We begin with the raw amino-acid sequence, 477 residues long: Aspartyl/glutamyl-tRNA(Asn/Gln) amidotransferase subunit B (477 aa).

It belongs to the GatB/GatE family. GatB subfamily. As to quaternary structure, heterotrimer of A, B and C subunits.

It catalyses the reaction L-glutamyl-tRNA(Gln) + L-glutamine + ATP + H2O = L-glutaminyl-tRNA(Gln) + L-glutamate + ADP + phosphate + H(+). It carries out the reaction L-aspartyl-tRNA(Asn) + L-glutamine + ATP + H2O = L-asparaginyl-tRNA(Asn) + L-glutamate + ADP + phosphate + 2 H(+). In terms of biological role, allows the formation of correctly charged Asn-tRNA(Asn) or Gln-tRNA(Gln) through the transamidation of misacylated Asp-tRNA(Asn) or Glu-tRNA(Gln) in organisms which lack either or both of asparaginyl-tRNA or glutaminyl-tRNA synthetases. The reaction takes place in the presence of glutamine and ATP through an activated phospho-Asp-tRNA(Asn) or phospho-Glu-tRNA(Gln). The protein is Aspartyl/glutamyl-tRNA(Asn/Gln) amidotransferase subunit B of Streptococcus gordonii (strain Challis / ATCC 35105 / BCRC 15272 / CH1 / DL1 / V288).